The following is a 245-amino-acid chain: DNA polymerase III subunit epsilon (245 aa).

2 residues coordinate a divalent metal cation: D11 and E13. Substrate is bound by residues D11, E13, Q60, and H65. The Proton acceptor role is filled by H161. D166 serves as a coordination point for a divalent metal cation. D166 serves as a coordination point for substrate.

The DNA polymerase holoenzyme is a complex that contains 10 different types of subunits. These subunits are organized into 3 functionally essential subassemblies: the pol III core, the beta sliding clamp processivity factor and the clamp-loading complex. The pol III core (subunits alpha,epsilon and theta) contains the polymerase and the 3'-5' exonuclease proofreading activities. The polymerase is tethered to the template via the sliding clamp processivity factor. The clamp-loading complex assembles the beta processivity factor onto the primer template and plays a central role in the organization and communication at the replication fork. This complex contains delta, delta', psi and chi, and copies of either or both of two different DnaX proteins, gamma and tau. The composition of the holoenzyme is, therefore: (alpha,epsilon,theta)[2]-(gamma/tau)[3]-delta,delta', psi,chi-beta[4]. It depends on Mg(2+) as a cofactor. Requires Mn(2+) as cofactor.

The catalysed reaction is DNA(n) + a 2'-deoxyribonucleoside 5'-triphosphate = DNA(n+1) + diphosphate. In terms of biological role, DNA polymerase III is a complex, multichain enzyme responsible for most of the replicative synthesis in bacteria. The epsilon subunit contain the editing function and is a proofreading 3'-5' exonuclease. This chain is DNA polymerase III subunit epsilon (dnaQ), found in Buchnera aphidicola subsp. Baizongia pistaciae (strain Bp).